A 584-amino-acid chain; its full sequence is Arginine--tRNA ligase (584 aa).

The 'HIGH' region signature appears at 127 to 137 (PNLAKEMHVGH).

Belongs to the class-I aminoacyl-tRNA synthetase family. Monomer.

It is found in the cytoplasm. The catalysed reaction is tRNA(Arg) + L-arginine + ATP = L-arginyl-tRNA(Arg) + AMP + diphosphate. The protein is Arginine--tRNA ligase of Alcanivorax borkumensis (strain ATCC 700651 / DSM 11573 / NCIMB 13689 / SK2).